The chain runs to 432 residues: Trigger factor (432 aa).

The 86-residue stretch at 161 to 246 folds into the PPIase FKBP-type domain; the sequence is GSRATIDFVG…LNKVEARELP (86 aa).

Belongs to the FKBP-type PPIase family. Tig subfamily.

It localises to the cytoplasm. The catalysed reaction is [protein]-peptidylproline (omega=180) = [protein]-peptidylproline (omega=0). Functionally, involved in protein export. Acts as a chaperone by maintaining the newly synthesized protein in an open conformation. Functions as a peptidyl-prolyl cis-trans isomerase. The protein is Trigger factor of Vibrio atlanticus (strain LGP32) (Vibrio splendidus (strain Mel32)).